A 166-amino-acid polypeptide reads, in one-letter code: Putative universal stress protein SA1532 (166 aa).

It belongs to the universal stress protein A family.

The protein localises to the cytoplasm. The sequence is that of Putative universal stress protein SA1532 from Staphylococcus aureus (strain N315).